The chain runs to 585 residues: Glutamate decarboxylase 2 (585 aa).

A disordered region spans residues 1–24; it reads MASPGSGFWSFGSEDGSADPENPG. A phosphoserine mark is found at S3, S6, S10, and S13. S-palmitoyl cysteine attachment occurs at residues C30 and C45. Residue 181-183 coordinates substrate; that stretch reads QLS. At K396 the chain carries N6-(pyridoxal phosphate)lysine. Position 558 (R558) interacts with substrate.

It belongs to the group II decarboxylase family. Homodimer. Pyridoxal 5'-phosphate serves as cofactor. Phosphorylated; which does not affect kinetic parameters or subcellular location. Post-translationally, palmitoylated; which is required for presynaptic clustering.

The protein resides in the cytoplasm. Its subcellular location is the cytosol. It is found in the cytoplasmic vesicle. It localises to the presynaptic cell membrane. The protein localises to the golgi apparatus membrane. The enzyme catalyses L-glutamate + H(+) = 4-aminobutanoate + CO2. Its function is as follows. Catalyzes the production of GABA. The polypeptide is Glutamate decarboxylase 2 (Gad2) (Mus musculus (Mouse)).